Consider the following 369-residue polypeptide: Endophilin-A (369 aa).

The BAR domain maps to 18-248 (TEKMGGAEGT…LQEKRSEAES (231 aa)). Residues 227 to 247 (QCADVLRGLQETLQEKRSEAE) are a coiled coil. Residues 266 to 295 (GGGGGLNEDGTPSHISSSASPLPSPMRSPA) form a disordered region. Residues 277 to 294 (PSHISSSASPLPSPMRSP) show a composition bias toward low complexity. The region spanning 305–364 (QQQPCCQALYDFEPENPGELAFKENDIITLLNRVDDNWFEGAVNGRTGYFPQSYVQVQVP) is the SH3 domain.

Belongs to the endophilin family.

Its subcellular location is the cytoplasm. It localises to the membrane. Its function is as follows. Required presynaptically at the neuromuscular junction. Implicated in synaptic vesicle endocytosis. In Drosophila erecta (Fruit fly), this protein is Endophilin-A.